The chain runs to 350 residues: Ion-translocating oxidoreductase complex subunit D (350 aa).

Transmembrane regions (helical) follow at residues 20–40 (VMLW…LFFG), 42–62 (GNLI…AAFL), 89–109 (LPQF…IVVA), and 120–140 (PFNP…VAMT). FMN phosphoryl threonine is present on T178. Transmembrane regions (helical) follow at residues 204 to 224 (LIAR…VLLI), 228 to 248 (IITW…SLAF), 255 to 275 (YAPL…FFIA), 282 to 302 (ATSH…VYLI), and 306 to 326 (GNYP…VPFI).

This sequence belongs to the NqrB/RnfD family. In terms of assembly, the complex is composed of six subunits: RnfA, RnfB, RnfC, RnfD, RnfE and RnfG. FMN serves as cofactor.

It localises to the cell inner membrane. Its function is as follows. Part of a membrane-bound complex that couples electron transfer with translocation of ions across the membrane. The polypeptide is Ion-translocating oxidoreductase complex subunit D (Marinobacter nauticus (strain ATCC 700491 / DSM 11845 / VT8) (Marinobacter aquaeolei)).